The primary structure comprises 163 residues: Nucleotide-binding protein Bcer98_0876 (163 aa).

This sequence belongs to the YajQ family.

In terms of biological role, nucleotide-binding protein. This is Nucleotide-binding protein Bcer98_0876 from Bacillus cytotoxicus (strain DSM 22905 / CIP 110041 / 391-98 / NVH 391-98).